We begin with the raw amino-acid sequence, 325 residues long: Phospholipid phosphatase-related protein type 1 (325 aa).

An N-linked (GlcNAc...) asparagine glycan is attached at Asn5. A run of 3 helical transmembrane segments spans residues 13 to 33 (IIPC…LLAY), 67 to 87 (FITP…IIFI), and 127 to 147 (FTGV…AGQV). Asn163 is a glycosylation site (N-linked (GlcNAc...) asparagine). Transmembrane regions (helical) follow at residues 201 to 218 (AALS…ITST), 230 to 247 (VLCL…LNRV), and 257 to 277 (VIAG…CVVH). At Ser307 the chain carries Phosphoserine. N-linked (GlcNAc...) asparagine glycosylation is present at Asn316.

Belongs to the PA-phosphatase related phosphoesterase family.

Its subcellular location is the cell membrane. The protein resides in the cell projection. It localises to the neuron projection. Functionally, may play a role in neurite outgrowth and neurogenesis. The sequence is that of Phospholipid phosphatase-related protein type 1 from Homo sapiens (Human).